The chain runs to 747 residues: Flowering time control protein FCA (747 aa).

Positions 80–101 (YSVRPTTPPVQQPLSGQKRGYP) are disordered. RRM domains follow at residues 120–201 (VKLF…YADG) and 211–291 (FKLF…FAEP). Basic and acidic residues predominate over residues 291–301 (PKRPKPGESRE). The segment at 291 to 503 (PKRPKPGESR…QQPLQKMQHP (213 aa)) is disordered. 2 stretches are compositionally biased toward polar residues: residues 320-353 (RPTS…SNTG) and 395-406 (SSSATLQQQNRA). The span at 448-460 (SSQLPTSQLPPQQ) shows a compositional bias: low complexity. Residues 461–498 (NISRATAPQTPLNINLRPTTVSSATVQFPPRSQQQPLQ) are compositionally biased toward polar residues. The 34-residue stretch at 591 to 624 (GSVKCTWTEHTSPDGFKYYYNGLTGESKWEKPEE) folds into the WW domain. Residues 630-641 (REQQKQQQHQEK) show a composition bias toward basic and acidic residues. Disordered stretches follow at residues 630–707 (REQQ…SGIG) and 722–747 (AASM…KNKA). Low complexity predominate over residues 642 to 673 (PTIQQSQTQLQPLQQQPQQVQQQYQGQQLQQP). 2 stretches are compositionally biased toward polar residues: residues 674–707 (FYSS…SGIG) and 726–739 (NDIS…QSPQ).

As to quaternary structure, interacts (via C-terminus) with SWI3B and (via WW domain) with FY (via PPLPP motifs). As to expression, constitutively expressed, but the negative feedback maintains the active isoform a low level throughout much of the plant, except in meristematic cells at a specific time in development.

Its subcellular location is the nucleus. Its function is as follows. Plays a major role in the promotion of the transition of the vegetative meristem to reproductive development. Plays a role in the regulation of flowering time in the autonomous flowering pathway by decreasing FLOWERING LOCUS C mRNA levels. Required for RNA-mediated chromatin silencing of a range of loci in the genome. Cotranscriptionally recognizes aberrant RNA and marks it for silencing. Controls alternative cleavage and polyadenylation on pre-mRNAs and antisense RNAs. Acts redundantly with FPA to prevent the expression of distally polyadenylated antisense RNAs at the FLC locus. The protein is Flowering time control protein FCA (FCA) of Arabidopsis thaliana (Mouse-ear cress).